We begin with the raw amino-acid sequence, 515 residues long: Bifunctional purine biosynthesis protein PurH (515 aa).

In terms of domain architecture, MGS-like spans 1-145 (MTKRALISVS…KNHASVTVVV (145 aa)).

It belongs to the PurH family.

It catalyses the reaction (6R)-10-formyltetrahydrofolate + 5-amino-1-(5-phospho-beta-D-ribosyl)imidazole-4-carboxamide = 5-formamido-1-(5-phospho-D-ribosyl)imidazole-4-carboxamide + (6S)-5,6,7,8-tetrahydrofolate. It carries out the reaction IMP + H2O = 5-formamido-1-(5-phospho-D-ribosyl)imidazole-4-carboxamide. The protein operates within purine metabolism; IMP biosynthesis via de novo pathway; 5-formamido-1-(5-phospho-D-ribosyl)imidazole-4-carboxamide from 5-amino-1-(5-phospho-D-ribosyl)imidazole-4-carboxamide (10-formyl THF route): step 1/1. Its pathway is purine metabolism; IMP biosynthesis via de novo pathway; IMP from 5-formamido-1-(5-phospho-D-ribosyl)imidazole-4-carboxamide: step 1/1. The polypeptide is Bifunctional purine biosynthesis protein PurH (Streptococcus pyogenes serotype M6 (strain ATCC BAA-946 / MGAS10394)).